The primary structure comprises 277 residues: B3 domain-containing protein At3g19184 (277 aa).

Positions 33–94 are disordered; sequence QSLRVSSSSS…LERRPRRSSR (62 aa). Residues 130–221 constitute a DNA-binding region (TF-B3); that stretch reads FTKPMLQSHV…TFKVYIIRVN (92 aa). Positions 224 to 250 are enriched in acidic residues; the sequence is ANNDSDGNEVNDDDSDGNEEDRDNDNE. Residues 224–277 form a disordered region; that stretch reads ANNDSDGNEVNDDDSDGNEEDRDNDNESNEKQKETVSEGRQLRSSGKRKRRGRK. Residues 251 to 264 are compositionally biased toward basic and acidic residues; sequence SNEKQKETVSEGRQ. Over residues 268–277 the composition is skewed to basic residues; the sequence is SGKRKRRGRK.

Its subcellular location is the nucleus. The chain is B3 domain-containing protein At3g19184 from Arabidopsis thaliana (Mouse-ear cress).